Reading from the N-terminus, the 307-residue chain is Nitric oxide synthase-interacting protein homolog (307 aa).

The segment at 120–159 (PAMTPAHSSAAASEKPSTSSAAAAASSESSSASSISNMTN) is disordered. Over residues 127–155 (SSAAASEKPSTSSAAAAASSESSSASSIS) the composition is skewed to low complexity.

This sequence belongs to the NOSIP family.

It is found in the cytoplasm. It localises to the nucleus. Its function is as follows. Negatively regulates nitric oxide production by inducing nitric oxide synthase translocation to actin cytoskeleton and inhibiting its enzymatic activity. The polypeptide is Nitric oxide synthase-interacting protein homolog (Drosophila melanogaster (Fruit fly)).